Consider the following 300-residue polypeptide: MEPQYARLVKSAALAATALASILLLIKIVAWYHTGSVSLLAALVDSLVDIAASLTNLLVVRYSLQPADEEHTFGHGKAESLAALAQSMFISGSALFLFLTGFQHLYSPETLRDPGVGIAVTVVALFSTLLLVTYQRWVVRKTRSQAVRADMLHYQSDVMMNGAILIALALSWYGFQRADALFALAIGVYILYSALRMGHEAVQSLLDRALPDDERQAIIDVISSWPGVKGAHDLRTRQSGPTRFIQLHLEMDDALPLMQAHLLAEQVEQALLHRFPGADVLIHQDPCSVVPEGRQGRWEL.

The next 4 helical transmembrane spans lie at 12–32, 40–60, 82–102, and 114–134; these read AALA…VAWY, LAAL…LLVV, AALA…LTGF, and PGVG…LVTY. Zn(2+)-binding residues include D45 and D49. Residues H153 and D157 each coordinate Zn(2+). 2 helical membrane passes run 155–175 and 178–198; these read QSDV…WYGF and ADAL…LRMG.

Belongs to the cation diffusion facilitator (CDF) transporter (TC 2.A.4) family. FieF subfamily. Homodimer.

The protein resides in the cell inner membrane. It catalyses the reaction Zn(2+)(in) + H(+)(out) = Zn(2+)(out) + H(+)(in). It carries out the reaction Cd(2+)(in) + H(+)(out) = Cd(2+)(out) + H(+)(in). The enzyme catalyses Fe(2+)(in) + H(+)(out) = Fe(2+)(out) + H(+)(in). Its function is as follows. Divalent metal cation transporter which exports Zn(2+), Cd(2+) and possibly Fe(2+). May be involved in zinc and iron detoxification by efflux. The protein is Cation-efflux pump FieF of Serratia proteamaculans (strain 568).